Here is a 412-residue protein sequence, read N- to C-terminus: Adenylosuccinate synthetase (412 aa).

GTP-binding positions include 12–18 (GDEGKGK) and 40–42 (GHE). Asp-13 acts as the Proton acceptor in catalysis. Positions 13 and 40 each coordinate Mg(2+). Residues 13–16 (DEGK), 38–41 (NAGH), Arg-134, Asn-212, Thr-227, and Arg-291 each bind IMP. His-41 serves as the catalytic Proton donor. 287–293 (TSTGRRR) contributes to the substrate binding site. Residues Arg-293, 318–320 (KLD), and 400–402 (GTG) contribute to the GTP site.

Belongs to the adenylosuccinate synthetase family. As to quaternary structure, homodimer. Requires Mg(2+) as cofactor.

It localises to the cytoplasm. The catalysed reaction is IMP + L-aspartate + GTP = N(6)-(1,2-dicarboxyethyl)-AMP + GDP + phosphate + 2 H(+). Its pathway is purine metabolism; AMP biosynthesis via de novo pathway; AMP from IMP: step 1/2. Functionally, plays an important role in the de novo pathway and in the salvage pathway of purine nucleotide biosynthesis. Catalyzes the first committed step in the biosynthesis of AMP from IMP. The polypeptide is Adenylosuccinate synthetase (Fusarium vanettenii (strain ATCC MYA-4622 / CBS 123669 / FGSC 9596 / NRRL 45880 / 77-13-4) (Fusarium solani subsp. pisi)).